The primary structure comprises 152 residues: Ribosome maturation factor RimP (152 aa).

Belongs to the RimP family.

It is found in the cytoplasm. In terms of biological role, required for maturation of 30S ribosomal subunits. This Alkalilimnicola ehrlichii (strain ATCC BAA-1101 / DSM 17681 / MLHE-1) protein is Ribosome maturation factor RimP.